The chain runs to 130 residues: Small ribosomal subunit protein uS8 (130 aa).

Belongs to the universal ribosomal protein uS8 family. In terms of assembly, part of the 30S ribosomal subunit. Contacts proteins S5 and S12.

Functionally, one of the primary rRNA binding proteins, it binds directly to 16S rRNA central domain where it helps coordinate assembly of the platform of the 30S subunit. This Mannheimia succiniciproducens (strain KCTC 0769BP / MBEL55E) protein is Small ribosomal subunit protein uS8.